The primary structure comprises 268 residues: Glutamate 5-kinase (268 aa).

Residue Lys15 coordinates ATP. Ser55, Asp142, and Asn158 together coordinate substrate. Residue 178–179 (SD) participates in ATP binding.

It belongs to the glutamate 5-kinase family.

The protein localises to the cytoplasm. It carries out the reaction L-glutamate + ATP = L-glutamyl 5-phosphate + ADP. It participates in amino-acid biosynthesis; L-proline biosynthesis; L-glutamate 5-semialdehyde from L-glutamate: step 1/2. Its function is as follows. Catalyzes the transfer of a phosphate group to glutamate to form L-glutamate 5-phosphate. This chain is Glutamate 5-kinase, found in Oenococcus oeni (strain ATCC BAA-331 / PSU-1).